The following is a 76-amino-acid chain: SFVFYLFTLITVVRAEEFILENEAEDIAPAVHGESGRECIGHRRSCKEDRNGCCRLYTCNCWYPTPGDQWCKCQLW.

A signal peptide spans 1-15; sequence SFVFYLFTLITVVRA. Positions 16 to 36 are excised as a propeptide; the sequence is EEFILENEAEDIAPAVHGESG. Cystine bridges form between Cys39–Cys54, Cys46–Cys59, Cys53–Cys73, and Cys61–Cys71.

It belongs to the neurotoxin 02 (plectoxin) family. 09 subfamily. As to expression, expressed by the venom gland.

Its subcellular location is the secreted. This Phoneutria nigriventer (Brazilian armed spider) protein is U10-ctenitoxin-Pn1a.